Reading from the N-terminus, the 352-residue chain is Protein-glutamate methylesterase/protein-glutamine glutaminase 2 (352 aa).

In terms of domain architecture, Response regulatory spans M1–E116. D50 carries the 4-aspartylphosphate modification. A CheB-type methylesterase domain is found at A162–Q352. Active-site residues include S174, H200, and D296.

The protein belongs to the CheB family. Phosphorylated by CheA. Phosphorylation of the N-terminal regulatory domain activates the methylesterase activity.

It localises to the cytoplasm. It catalyses the reaction [protein]-L-glutamate 5-O-methyl ester + H2O = L-glutamyl-[protein] + methanol + H(+). The enzyme catalyses L-glutaminyl-[protein] + H2O = L-glutamyl-[protein] + NH4(+). In terms of biological role, involved in chemotaxis. Part of a chemotaxis signal transduction system that modulates chemotaxis in response to various stimuli. Catalyzes the demethylation of specific methylglutamate residues introduced into the chemoreceptors (methyl-accepting chemotaxis proteins or MCP) by CheR. Also mediates the irreversible deamidation of specific glutamine residues to glutamic acid. This chain is Protein-glutamate methylesterase/protein-glutamine glutaminase 2, found in Xanthomonas campestris pv. campestris (strain ATCC 33913 / DSM 3586 / NCPPB 528 / LMG 568 / P 25).